The chain runs to 134 residues: Arsenate reductase (134 aa).

Residues C11, C83, and C90 each act as nucleophile in the active site. 2 disulfide bridges follow: C11/C83 and C83/C90.

The protein belongs to the low molecular weight phosphotyrosine protein phosphatase family. Thioredoxin-coupled ArsC subfamily.

The protein localises to the cytoplasm. The enzyme catalyses arsenate + [thioredoxin]-dithiol + H(+) = arsenite + [thioredoxin]-disulfide + H2O. Functionally, catalyzes the reduction of arsenate [As(V)] to arsenite [As(III)]. In Bacillus cereus (strain Q1), this protein is Arsenate reductase.